A 439-amino-acid chain; its full sequence is Xylose isomerase (439 aa).

Catalysis depends on residues histidine 101 and aspartate 104. Residues glutamate 232, glutamate 268, histidine 271, aspartate 296, aspartate 307, aspartate 309, and aspartate 339 each contribute to the Mg(2+) site.

This sequence belongs to the xylose isomerase family. In terms of assembly, homotetramer. Mg(2+) serves as cofactor.

Its subcellular location is the cytoplasm. It catalyses the reaction alpha-D-xylose = alpha-D-xylulofuranose. The chain is Xylose isomerase from Histophilus somni (strain 2336) (Haemophilus somnus).